The chain runs to 37 residues: MVEPLLSGIVLGLIVVTLSGLFYAAYKQYKRPNELGG.

A helical membrane pass occupies residues Leu5–Ala25.

This sequence belongs to the PetG family. As to quaternary structure, the 4 large subunits of the cytochrome b6-f complex are cytochrome b6, subunit IV (17 kDa polypeptide, PetD), cytochrome f and the Rieske protein, while the 4 small subunits are PetG, PetL, PetM and PetN. The complex functions as a dimer.

The protein resides in the cellular thylakoid membrane. Its function is as follows. Component of the cytochrome b6-f complex, which mediates electron transfer between photosystem II (PSII) and photosystem I (PSI), cyclic electron flow around PSI, and state transitions. PetG is required for either the stability or assembly of the cytochrome b6-f complex. The sequence is that of Cytochrome b6-f complex subunit 5 from Trichormus variabilis (strain ATCC 29413 / PCC 7937) (Anabaena variabilis).